The sequence spans 452 residues: Histone acetyltransferase type B subunit 2 (452 aa).

WD repeat units lie at residues 155–195, 205–245, 256–296, 300–340, 344–384, and 401–441; these read YEDG…NSKE, HHTK…SDGS, HHDA…NKAA, KESR…TPIS, SHCD…DDLS, and GHSS…SNDE.

Belongs to the WD repeat RBAP46/RBAP48/MSI1 family. Component of the HAT-B complex composed of at least HAT1 and HAT2. The HAT-B complex binds to histone H4 tail.

Its subcellular location is the cytoplasm. It localises to the nucleus. Its function is as follows. Regulatory subunit of the histone acetylase B (HAT-B) complex. The complex acetylates 'Lys-12' of histone H4 which is required for telomeric silencing. The chain is Histone acetyltransferase type B subunit 2 (HAT2) from Yarrowia lipolytica (strain CLIB 122 / E 150) (Yeast).